Consider the following 247-residue polypeptide: Probable transcriptional regulatory protein Dalk_2958 (247 aa).

It belongs to the TACO1 family.

The protein localises to the cytoplasm. The sequence is that of Probable transcriptional regulatory protein Dalk_2958 from Desulfatibacillum aliphaticivorans.